The chain runs to 553 residues: Formate--tetrahydrofolate ligase (553 aa).

63–70 (TPAGEGKS) lines the ATP pocket.

Belongs to the formate--tetrahydrofolate ligase family.

The catalysed reaction is (6S)-5,6,7,8-tetrahydrofolate + formate + ATP = (6R)-10-formyltetrahydrofolate + ADP + phosphate. The protein operates within one-carbon metabolism; tetrahydrofolate interconversion. In Limosilactobacillus fermentum (strain NBRC 3956 / LMG 18251) (Lactobacillus fermentum), this protein is Formate--tetrahydrofolate ligase.